A 633-amino-acid chain; its full sequence is Electron transfer flavoprotein-ubiquinone oxidoreductase, mitochondrial (633 aa).

The N-terminal 90 residues, 1-90 (MHRFLVKLSS…NGITSSRCIS (90 aa)), are a transit peptide targeting the mitochondrion. An FAD-binding site is contributed by 102–116 (VLIVGAGPAGLSAAI). The stretch at 140–161 (VGGHIISGNVFEPLALDELLPH) is an intramembrane region. Residues Gly334 and Gly335 each coordinate a ubiquinone. Residues 401–421 (IPYPVFPGGAIIGCSAGFLNV) lie within the membrane without spanning it. The [4Fe-4S] cluster site is built by Cys578, Cys602, Cys605, and Cys608. Residues 593 to 622 (PKLQINAQNCLHCKACDIKDPKQNIEWTVP) form the 4Fe-4S ferredoxin-type domain.

The protein belongs to the ETF-QO/FixC family. [4Fe-4S] cluster serves as cofactor. Requires FAD as cofactor.

The protein localises to the mitochondrion inner membrane. The catalysed reaction is a ubiquinone + reduced [electron-transfer flavoprotein] = a ubiquinol + oxidized [electron-transfer flavoprotein] + H(+). Up-regulated by KIN10, by S1-bZIP specific dimers, and also by C/S1 bZIP heterodimers. Functionally, accepts electrons from ETF and reduces ubiquinone. May act downstream of IVD and D2HGDH in the degradation of phytol or chlorophyll during dark-induced senescence and sugar starvation. The sequence is that of Electron transfer flavoprotein-ubiquinone oxidoreductase, mitochondrial (ETFQO) from Arabidopsis thaliana (Mouse-ear cress).